Consider the following 271-residue polypeptide: Purine nucleoside phosphorylase 1 (271 aa).

Phosphate contacts are provided by residues Ser-28, His-59, 79 to 81 (RFH), and Ala-111. Ser-28 is modified (phosphoserine). Residue Glu-191 participates in a purine D-ribonucleoside binding. Ser-210 provides a ligand contact to phosphate. Residue Asn-233 coordinates a purine D-ribonucleoside.

This sequence belongs to the PNP/MTAP phosphorylase family. As to quaternary structure, homotrimer.

The enzyme catalyses a purine 2'-deoxy-D-ribonucleoside + phosphate = a purine nucleobase + 2-deoxy-alpha-D-ribose 1-phosphate. The protein operates within purine metabolism; purine nucleoside salvage. Functionally, the purine nucleoside phosphorylases catalyze the phosphorolytic breakdown of the N-glycosidic bond in the beta-(deoxy)ribonucleoside molecules, with the formation of the corresponding free purine bases and pentose-1-phosphate. Cleaves guanosine, inosine, 2'-deoxyguanosine and 2'-deoxyinosine. In Bacillus subtilis (strain 168), this protein is Purine nucleoside phosphorylase 1 (punA).